The following is a 395-amino-acid chain: Chaperone protein DnaJ (395 aa).

A J domain is found at 5–70; that stretch reads DFYEVLGVDK…NKRAAYDRMG (66 aa). Residues 145 to 223 form a CR-type zinc finger; the sequence is GKDETIKVPT…CDGVGRVRKT (79 aa). Zn(2+)-binding residues include cysteine 158, cysteine 161, cysteine 175, cysteine 178, cysteine 197, cysteine 200, cysteine 211, and cysteine 214. CXXCXGXG motif repeat units follow at residues 158–165, 175–182, 197–204, and 211–218; these read CERCDGQG, CGTCQGAG, CPQCGGRG, and CNDCDGVG.

This sequence belongs to the DnaJ family. Homodimer. Zn(2+) is required as a cofactor.

It localises to the cytoplasm. Functionally, participates actively in the response to hyperosmotic and heat shock by preventing the aggregation of stress-denatured proteins and by disaggregating proteins, also in an autonomous, DnaK-independent fashion. Unfolded proteins bind initially to DnaJ; upon interaction with the DnaJ-bound protein, DnaK hydrolyzes its bound ATP, resulting in the formation of a stable complex. GrpE releases ADP from DnaK; ATP binding to DnaK triggers the release of the substrate protein, thus completing the reaction cycle. Several rounds of ATP-dependent interactions between DnaJ, DnaK and GrpE are required for fully efficient folding. Also involved, together with DnaK and GrpE, in the DNA replication of plasmids through activation of initiation proteins. The polypeptide is Chaperone protein DnaJ (Maricaulis maris (strain MCS10) (Caulobacter maris)).